The following is a 1371-amino-acid chain: DNA-directed RNA polymerase subunit beta' (1371 aa).

Positions 71, 73, 86, and 89 each coordinate Zn(2+). D461, D463, and D465 together coordinate Mg(2+). 4 residues coordinate Zn(2+): C803, C877, C884, and C887.

Belongs to the RNA polymerase beta' chain family. In terms of assembly, the RNAP catalytic core consists of 2 alpha, 1 beta, 1 beta' and 1 omega subunit. When a sigma factor is associated with the core the holoenzyme is formed, which can initiate transcription. It depends on Mg(2+) as a cofactor. Zn(2+) is required as a cofactor.

The enzyme catalyses RNA(n) + a ribonucleoside 5'-triphosphate = RNA(n+1) + diphosphate. Its function is as follows. DNA-dependent RNA polymerase catalyzes the transcription of DNA into RNA using the four ribonucleoside triphosphates as substrates. The chain is DNA-directed RNA polymerase subunit beta' from Thermodesulfovibrio yellowstonii (strain ATCC 51303 / DSM 11347 / YP87).